The following is a 32-amino-acid chain: Calcitonin (32 aa).

A disulfide bridge connects residues C1 and C7. P32 bears the Proline amide mark.

This sequence belongs to the calcitonin family.

It localises to the secreted. Functionally, calcitonin is a peptide hormone that causes a rapid but short-lived drop in the level of calcium and phosphate in blood by promoting the incorporation of those ions in the bones. Calcitonin function is mediated by the calcitonin receptor/CALCR and the CALCR-RAMP2 (AMYR2) receptor complex. This is Calcitonin (CALCA) from Sus scrofa (Pig).